We begin with the raw amino-acid sequence, 417 residues long: Serine hydroxymethyltransferase (417 aa).

(6S)-5,6,7,8-tetrahydrofolate is bound by residues Leu-121 and 125–127; that span reads GHL. Residue Lys-229 is modified to N6-(pyridoxal phosphate)lysine. 355–357 lines the (6S)-5,6,7,8-tetrahydrofolate pocket; it reads SPF.

Belongs to the SHMT family. In terms of assembly, homodimer. The cofactor is pyridoxal 5'-phosphate.

The protein localises to the cytoplasm. The enzyme catalyses (6R)-5,10-methylene-5,6,7,8-tetrahydrofolate + glycine + H2O = (6S)-5,6,7,8-tetrahydrofolate + L-serine. It functions in the pathway one-carbon metabolism; tetrahydrofolate interconversion. The protein operates within amino-acid biosynthesis; glycine biosynthesis; glycine from L-serine: step 1/1. Catalyzes the reversible interconversion of serine and glycine with tetrahydrofolate (THF) serving as the one-carbon carrier. This reaction serves as the major source of one-carbon groups required for the biosynthesis of purines, thymidylate, methionine, and other important biomolecules. Also exhibits THF-independent aldolase activity toward beta-hydroxyamino acids, producing glycine and aldehydes, via a retro-aldol mechanism. This chain is Serine hydroxymethyltransferase, found in Buchnera aphidicola subsp. Acyrthosiphon pisum (strain APS) (Acyrthosiphon pisum symbiotic bacterium).